A 129-amino-acid chain; its full sequence is Large-conductance mechanosensitive channel (129 aa).

3 consecutive transmembrane segments (helical) span residues 8-28 (FAFR…AAFS), 30-50 (IIKS…IGGI), and 67-87 (GQFL…FLFV).

It belongs to the MscL family. As to quaternary structure, homopentamer.

It localises to the cell membrane. Functionally, channel that opens in response to stretch forces in the membrane lipid bilayer. May participate in the regulation of osmotic pressure changes within the cell. This Exiguobacterium sibiricum (strain DSM 17290 / CCUG 55495 / CIP 109462 / JCM 13490 / 255-15) protein is Large-conductance mechanosensitive channel.